The sequence spans 1138 residues: Condensin-2 complex subunit G2 (1138 aa).

Residue Ser-30 is modified to Phosphoserine. Residues 459–497 (LLPTLRYSLHDNSEKVRVAFVDLLLKIKAVRAAKFWKIC) form an HEAT repeat. Residue Thr-1114 is modified to Phosphothreonine.

Component of the condensin-2 complex, which contains the SMC2 and SMC4 heterodimer, and 3 non SMC subunits that probably regulate the complex: NCAPH2, NCAPD3 and NCAPG2. In terms of tissue distribution, expressed in spleen, lung and testis as well as in hematopoietic cell lines.

The protein resides in the nucleus. Its function is as follows. Regulatory subunit of the condensin-2 complex, a complex which establishes mitotic chromosome architecture and is involved in physical rigidity of the chromatid axis. Is required for early embryonic development and is essential for viability and expansion of the inner cell mass (ICM) of the implanting blastocyst. The chain is Condensin-2 complex subunit G2 (Ncapg2) from Mus musculus (Mouse).